Here is a 100-residue protein sequence, read N- to C-terminus: MISEERLLKVILAPHISEKSTVNAEKNNTVVFRVAIDATKAEVKAAVAQLFEVEVDSVRTLVNKGKTKRHGARTGRRSDWKKAYVTLAEGADIDFVGGAE.

Belongs to the universal ribosomal protein uL23 family. Part of the 50S ribosomal subunit. Contacts protein L29, and trigger factor when it is bound to the ribosome.

In terms of biological role, one of the early assembly proteins it binds 23S rRNA. One of the proteins that surrounds the polypeptide exit tunnel on the outside of the ribosome. Forms the main docking site for trigger factor binding to the ribosome. The sequence is that of Large ribosomal subunit protein uL23 from Shewanella piezotolerans (strain WP3 / JCM 13877).